Reading from the N-terminus, the 242-residue chain is Anamorsin homolog (242 aa).

Residues 1–140 (MMNFADTLVI…NVTAENPDFL (140 aa)) are N-terminal SAM-like domain. The interval 140–159 (LSNEDDNDEHSSDGEAHENA) is disordered. The segment at 141-162 (SNEDDNDEHSSDGEAHENAEDN) is linker. Positions 148–159 (EHSSDGEAHENA) are enriched in basic and acidic residues. Residues Cys-205, Cys-208, Cys-216, and Cys-219 each contribute to the [4Fe-4S] cluster site. Short sequence motifs (cx2C motif) lie at residues 205 to 208 (CGNC) and 216 to 219 (CASC). Residues 205-219 (CGNCYLGDAFRCASC) are fe-S binding site B.

The protein belongs to the anamorsin family. As to quaternary structure, monomer. The cofactor is [4Fe-4S] cluster.

The protein localises to the cytoplasm. It is found in the mitochondrion intermembrane space. Its function is as follows. Component of the cytosolic iron-sulfur (Fe-S) protein assembly (CIA) machinery. Required for the maturation of extramitochondrial Fe-S proteins. Part of an electron transfer chain functioning in an early step of cytosolic Fe-S biogenesis, facilitating the de novo assembly of a [4Fe-4S] cluster on the cytosolic Fe-S scaffold complex. Electrons are transferred from NADPH via a FAD- and FMN-containing diflavin oxidoreductase. Together with the diflavin oxidoreductase, also required for the assembly of the diferric tyrosyl radical cofactor of ribonucleotide reductase (RNR), probably by providing electrons for reduction during radical cofactor maturation in the catalytic small subunit. In Plasmodium vivax (strain Salvador I), this protein is Anamorsin homolog.